The chain runs to 170 residues: Odorant-binding protein 2b (170 aa).

A signal peptide spans 1 to 15 (MKTLFLGVTLGLAAA). Cysteines 74 and 166 form a disulfide.

It belongs to the calycin superfamily. Lipocalin family. Strongly expressed in genital sphere organs such as the prostate and mammary glands.

Its subcellular location is the secreted. Its function is as follows. Probably binds and transports small hydrophobic volatile molecules. The polypeptide is Odorant-binding protein 2b (OBP2B) (Homo sapiens (Human)).